Here is a 355-residue protein sequence, read N- to C-terminus: 3-dehydroquinate synthase (355 aa).

NAD(+) is bound by residues 71 to 76 (EGEERK), 105 to 109 (GVVGD), 129 to 130 (TS), Lys-142, and Lys-151. Zn(2+) is bound by residues Glu-184, His-246, and His-263.

This sequence belongs to the sugar phosphate cyclases superfamily. Dehydroquinate synthase family. Requires NAD(+) as cofactor. Co(2+) serves as cofactor. The cofactor is Zn(2+).

Its subcellular location is the cytoplasm. It carries out the reaction 7-phospho-2-dehydro-3-deoxy-D-arabino-heptonate = 3-dehydroquinate + phosphate. Its pathway is metabolic intermediate biosynthesis; chorismate biosynthesis; chorismate from D-erythrose 4-phosphate and phosphoenolpyruvate: step 2/7. Functionally, catalyzes the conversion of 3-deoxy-D-arabino-heptulosonate 7-phosphate (DAHP) to dehydroquinate (DHQ). This Streptococcus pneumoniae serotype 4 (strain ATCC BAA-334 / TIGR4) protein is 3-dehydroquinate synthase.